The primary structure comprises 471 residues: G2/mitotic-specific cyclin-1 (471 aa).

This sequence belongs to the cyclin family. Cyclin AB subfamily.

In terms of biological role, essential for the control of the cell cycle at the G2/M (mitosis) transition. Interacts with the CDC2 protein kinase to form MPF. G2/M cyclins accumulate steadily during G2 and are abruptly destroyed at mitosis. The chain is G2/mitotic-specific cyclin-1 (CLB1) from Saccharomyces cerevisiae (strain ATCC 204508 / S288c) (Baker's yeast).